Reading from the N-terminus, the 140-residue chain is Small ribosomal subunit protein uS12 (140 aa).

Asp-102 is modified (3-methylthioaspartic acid).

This sequence belongs to the universal ribosomal protein uS12 family. In terms of assembly, part of the 30S ribosomal subunit. Contacts proteins S8 and S17. May interact with IF1 in the 30S initiation complex.

In terms of biological role, with S4 and S5 plays an important role in translational accuracy. Its function is as follows. Interacts with and stabilizes bases of the 16S rRNA that are involved in tRNA selection in the A site and with the mRNA backbone. Located at the interface of the 30S and 50S subunits, it traverses the body of the 30S subunit contacting proteins on the other side and probably holding the rRNA structure together. The combined cluster of proteins S8, S12 and S17 appears to hold together the shoulder and platform of the 30S subunit. This chain is Small ribosomal subunit protein uS12, found in Geobacillus sp. (strain WCH70).